The sequence spans 143 residues: Hemoglobin subunit alpha (143 aa).

The Globin domain occupies 2–143 (TLSDKDKSTV…VALALAERYR (142 aa)). An O2-binding site is contributed by His-60. Residue His-89 coordinates heme b.

Belongs to the globin family. In terms of assembly, heterotetramer of two alpha chains and two beta chains. Red blood cells.

In terms of biological role, involved in oxygen transport from gills to the various peripheral tissues. The chain is Hemoglobin subunit alpha (hba) from Thunnus thynnus (Atlantic bluefin tuna).